The chain runs to 131 residues: UPF0102 protein Ent638_3585 (131 aa).

Residues methionine 1 to glycine 20 form a disordered region.

It belongs to the UPF0102 family.

This Enterobacter sp. (strain 638) protein is UPF0102 protein Ent638_3585.